A 178-amino-acid chain; its full sequence is tRNA (cytidine(56)-2'-O)-methyltransferase (178 aa).

Leucine 88 is an S-adenosyl-L-methionine binding site.

The protein belongs to the aTrm56 family. In terms of assembly, homodimer.

The protein localises to the cytoplasm. It carries out the reaction cytidine(56) in tRNA + S-adenosyl-L-methionine = 2'-O-methylcytidine(56) in tRNA + S-adenosyl-L-homocysteine + H(+). Functionally, specifically catalyzes the AdoMet-dependent 2'-O-ribose methylation of cytidine at position 56 in tRNAs. In Methanopyrus kandleri (strain AV19 / DSM 6324 / JCM 9639 / NBRC 100938), this protein is tRNA (cytidine(56)-2'-O)-methyltransferase.